Here is a 45-residue protein sequence, read N- to C-terminus: Large ribosomal subunit protein bL34 (45 aa).

Residues 1 to 45 (MTKRTFGGTSRKRKRVSGFRVRMRSHTGRRVVRTRRKRGRSRLTV) form a disordered region. A compositionally biased stretch (basic residues) spans 10–45 (SRKRKRVSGFRVRMRSHTGRRVVRTRRKRGRSRLTV).

The protein belongs to the bacterial ribosomal protein bL34 family.

The sequence is that of Large ribosomal subunit protein bL34 from Prochlorococcus marinus (strain NATL2A).